A 151-amino-acid polypeptide reads, in one-letter code: MQKTTRTMPAHKHVALVAHDNCKPELLRWVKENKEKLQRHFLYATGTTGHMLSKETGLAIKSMISGPMGGDQQLGALISEGKIDVLVFFWDPLNAVPHDPDVKALLRIASVWNIPVATNRATAKFLFDSPLLEQEVDIEVPDYEAYLAERM.

In terms of domain architecture, MGS-like spans 6–151 (RTMPAHKHVA…DYEAYLAERM (146 aa)). Substrate contacts are provided by residues H19, K23, 45 to 48 (TGTT), and 65 to 66 (SG). D71 serves as the catalytic Proton donor/acceptor. H98 is a substrate binding site.

The protein belongs to the methylglyoxal synthase family.

The enzyme catalyses dihydroxyacetone phosphate = methylglyoxal + phosphate. Functionally, catalyzes the formation of methylglyoxal from dihydroxyacetone phosphate. The chain is Methylglyoxal synthase from Vibrio parahaemolyticus serotype O3:K6 (strain RIMD 2210633).